A 347-amino-acid polypeptide reads, in one-letter code: Methylthioribose-1-phosphate isomerase (347 aa).

Substrate is bound by residues 46–48 (RGA), arginine 89, and glutamine 196. The active-site Proton donor is the aspartate 237. 247 to 248 (NK) provides a ligand contact to substrate.

The protein belongs to the eIF-2B alpha/beta/delta subunits family. MtnA subfamily.

It carries out the reaction 5-(methylsulfanyl)-alpha-D-ribose 1-phosphate = 5-(methylsulfanyl)-D-ribulose 1-phosphate. Its pathway is amino-acid biosynthesis; L-methionine biosynthesis via salvage pathway; L-methionine from S-methyl-5-thio-alpha-D-ribose 1-phosphate: step 1/6. Functionally, catalyzes the interconversion of methylthioribose-1-phosphate (MTR-1-P) into methylthioribulose-1-phosphate (MTRu-1-P). The protein is Methylthioribose-1-phosphate isomerase of Chloroflexus aurantiacus (strain ATCC 29366 / DSM 635 / J-10-fl).